The chain runs to 174 residues: NADH-quinone oxidoreductase subunit I (174 aa).

4Fe-4S ferredoxin-type domains follow at residues 44-74 (LNRY…VEGD) and 90-119 (RVYQ…MTND). Cys54, Cys57, Cys60, Cys64, Cys99, Cys102, Cys105, and Cys109 together coordinate [4Fe-4S] cluster.

This sequence belongs to the complex I 23 kDa subunit family. NDH-1 is composed of 14 different subunits. Subunits NuoA, H, J, K, L, M, N constitute the membrane sector of the complex. The cofactor is [4Fe-4S] cluster.

Its subcellular location is the cell membrane. The enzyme catalyses a quinone + NADH + 5 H(+)(in) = a quinol + NAD(+) + 4 H(+)(out). Its function is as follows. NDH-1 shuttles electrons from NADH, via FMN and iron-sulfur (Fe-S) centers, to quinones in the respiratory chain. The immediate electron acceptor for the enzyme in this species is believed to be menaquinone. Couples the redox reaction to proton translocation (for every two electrons transferred, four hydrogen ions are translocated across the cytoplasmic membrane), and thus conserves the redox energy in a proton gradient. The chain is NADH-quinone oxidoreductase subunit I from Mycobacterium sp. (strain KMS).